Consider the following 131-residue polypeptide: Large ribosomal subunit protein bL17 (131 aa).

Belongs to the bacterial ribosomal protein bL17 family. Part of the 50S ribosomal subunit. Contacts protein L32.

This Shewanella baltica (strain OS223) protein is Large ribosomal subunit protein bL17.